The chain runs to 743 residues: DNA ligase 2 (743 aa).

NAD(+) is bound by residues 45–49, 94–95, and E125; these read DADFD and SL. K127 functions as the N6-AMP-lysine intermediate in the catalytic mechanism. R148, E185, K301, and K325 together coordinate NAD(+). C419, C422, C438, and C444 together coordinate Zn(2+). The 90-residue stretch at 639–728 folds into the BRCT domain; that stretch reads EGPRPLEGLT…PERAKEAALP (90 aa). The interval 720-743 is disordered; that stretch reads ERAKEAALPVPEAAPAADPENSGE. A compositionally biased stretch (low complexity) spans 725–743; sequence AALPVPEAAPAADPENSGE.

The protein belongs to the NAD-dependent DNA ligase family. LigA subfamily. It depends on Mg(2+) as a cofactor. Mn(2+) is required as a cofactor.

It catalyses the reaction NAD(+) + (deoxyribonucleotide)n-3'-hydroxyl + 5'-phospho-(deoxyribonucleotide)m = (deoxyribonucleotide)n+m + AMP + beta-nicotinamide D-nucleotide.. Its function is as follows. DNA ligase that catalyzes the formation of phosphodiester linkages between 5'-phosphoryl and 3'-hydroxyl groups in double-stranded DNA using NAD as a coenzyme and as the energy source for the reaction. It is essential for DNA replication and repair of damaged DNA. The chain is DNA ligase 2 from Streptomyces griseus subsp. griseus (strain JCM 4626 / CBS 651.72 / NBRC 13350 / KCC S-0626 / ISP 5235).